Here is a 266-residue protein sequence, read N- to C-terminus: NADP-dependent mannitol dehydrogenase (266 aa).

Residues threonine 31, isoleucine 33, asparagine 107, and arginine 140 each contribute to the NADP(+) site. The Proton donor role is filled by serine 159. 4 residues coordinate NADP(+): tyrosine 174, lysine 178, isoleucine 206, and threonine 208. Residue tyrosine 174 is the Proton acceptor of the active site. The Lowers pKa of active site Tyr role is filled by lysine 178.

It belongs to the short-chain dehydrogenases/reductases (SDR) family. Homotetramer.

It is found in the vacuole. It catalyses the reaction D-mannitol + NADP(+) = D-fructose + NADPH + H(+). This is NADP-dependent mannitol dehydrogenase from Alternaria alternata (Alternaria rot fungus).